The primary structure comprises 328 residues: MQYKNLGRSGLRVSQLSYGAWVTFGNQLDVKEAKALLQACRDAGVNFFDNAEVYANGRAEEIMGQAMRDLGWRRSDVVVSTKLFWGGQGPNDKGLSRKHIVEGLRGSLKRLDMDYVDVVYCHRPDATTPVEETVRAMNWVIDHGMAFYWGTSEWSAQQITEAWSVANRLDLVGPIVEQPEYNLFSRHKVESEFLPLYSTYGLGLTTWSPLASGVLTGKYAKGNIPADSRFALENYKNLANRSLVDDTLRKVNGLKPIASELGVSLAQLAIAWCASNPNVSSVITGATKENQIVENMKALDVIPLLTPEVVDKIEAVVQSKPKRTESYR.

The NADP(+) site is built by tryptophan 21, glutamine 27, and aspartate 49. The active-site Proton donor/acceptor is tyrosine 54. NADP(+) contacts are provided by serine 152, glutamine 178, tryptophan 207, serine 208, proline 209, leucine 210, alanine 211, lysine 218, arginine 229, glycine 285, threonine 287, glutamine 291, glutamate 294, and asparagine 295.

Belongs to the shaker potassium channel beta subunit family. Forms heteromultimeric complexes with potassium channel alpha subunits. As to expression, expressed in late-developed leaves with the highest expression in the flag leaf (at protein level).

Functionally, probable accessory potassium channel protein which modulates the activity of the pore-forming alpha subunit. The chain is Probable voltage-gated potassium channel subunit beta (KOB1) from Oryza sativa subsp. japonica (Rice).